The chain runs to 406 residues: Argininosuccinate synthase (406 aa).

ATP is bound by residues 14-22 and A41; that span reads AYSGGLDTS. Y92 and S97 together coordinate L-citrulline. G122 provides a ligand contact to ATP. L-aspartate contacts are provided by T124, N128, and D129. Residue N128 coordinates L-citrulline. L-citrulline contacts are provided by R132, S181, S190, E266, and Y278.

It belongs to the argininosuccinate synthase family. Type 1 subfamily. Homotetramer.

The protein resides in the cytoplasm. The catalysed reaction is L-citrulline + L-aspartate + ATP = 2-(N(omega)-L-arginino)succinate + AMP + diphosphate + H(+). Its pathway is amino-acid biosynthesis; L-arginine biosynthesis; L-arginine from L-ornithine and carbamoyl phosphate: step 2/3. In Geobacter sulfurreducens (strain ATCC 51573 / DSM 12127 / PCA), this protein is Argininosuccinate synthase.